A 1079-amino-acid polypeptide reads, in one-letter code: Psi-producing oxygenase A (1079 aa).

The segment at 105–446 is linoleate 8R-lipoxygenase; sequence TNTFLTTLWN…DGSYDDNDLV (342 aa). Position 202 (His202) interacts with heme b. Residue Tyr374 is part of the active site. His377 contacts heme b. The interval 654-1079 is 9,12-octadecadienoate 8-hydroperoxide 8R-isomerase; that stretch reads QFINSHSACM…WDGDLPEVKE (426 aa).

The protein belongs to the peroxidase family. As to quaternary structure, homotetramer. Requires heme b as cofactor.

The catalysed reaction is (9Z,12Z)-octadecadienoate + O2 = (8R,9Z,12Z)-8-hydroperoxyoctadeca-9,12-dienoate. The enzyme catalyses (8R,9Z,12Z)-8-hydroperoxyoctadeca-9,12-dienoate = (5S,8R,9Z,12Z)-5,8-dihydroxyoctadeca-9,12-dienoate. Functionally, bifunctional heme-containing enzyme that oxidizes linoleic acid to (8R,9Z,12Z)-8-hydroperoxyoctadeca-9,12-dienoate (within the N-terminal heme peroxidase domain), which is subsequently isomerized to (5S,8R,9Z,12Z)-5,8-dihydroxyoctadeca-9,12-dienoate (within the C-terminal P450 heme thiolate domain). Oxidized unsaturated fatty acids, so-called oxylipins, derived from endogenous fatty acids, influence the development of the asexual conidiophores and sexual cleistothecia and regulate the secondary metabolism. These substances were collectively named psi factors and are primarily a mixture of hydroxylated oleic, linoleic and alpha-linolenic acids. They are termed psi-beta, psi-alpha, and psi-gamma, respectively. Oxylipins may also serve as activators of mammalian immune responses contributing to enhanced resistance to opportunistic fungi and as factors that modulate fungal development contributing to resistance to host defenses. In Aspergillus fumigatus (strain ATCC MYA-4609 / CBS 101355 / FGSC A1100 / Af293) (Neosartorya fumigata), this protein is Psi-producing oxygenase A (ppoA).